A 351-amino-acid polypeptide reads, in one-letter code: Alcohol dehydrogenase 2 (351 aa).

The Zn(2+) site is built by C47, H70, C101, C104, C107, C115, and C157. Residues 181–187, D205, K210, 272–274, and R344 each bind NAD(+); these read GAGGGLG and VGL.

Belongs to the zinc-containing alcohol dehydrogenase family. Homotetramer. Zn(2+) is required as a cofactor.

It carries out the reaction a secondary alcohol + NAD(+) = a ketone + NADH + H(+). In terms of biological role, versatile oxidoreductase that catalyzes the oxidation and reduction of a broad range of substrates. Preferentially oxidizes secondary alcohols. Has highest activity for racemic 2-octanol. Is also an efficient reductase for selected substrates. Substrate selectivity was found for medium chain lipophilic ketones. Has highest activities for 2-octanone, 2-nonanone and 2-decanone. The enzyme is (S)-selective in the reduction direction and produces exclusively the (S)-enantiomer. The polypeptide is Alcohol dehydrogenase 2 (ADH2) (Yarrowia lipolytica (strain CLIB 122 / E 150) (Yeast)).